The primary structure comprises 301 residues: N-acetylmuramic acid 6-phosphate etherase (301 aa).

The region spanning 57–220 (ITEAFKKGGR…TTGAMIRSGK (164 aa)) is the SIS domain. The active-site Proton donor is the E85. Residue E116 is part of the active site.

The protein belongs to the GCKR-like family. MurNAc-6-P etherase subfamily. In terms of assembly, homodimer.

The catalysed reaction is N-acetyl-D-muramate 6-phosphate + H2O = N-acetyl-D-glucosamine 6-phosphate + (R)-lactate. It functions in the pathway amino-sugar metabolism; 1,6-anhydro-N-acetylmuramate degradation. The protein operates within amino-sugar metabolism; N-acetylmuramate degradation. It participates in cell wall biogenesis; peptidoglycan recycling. In terms of biological role, specifically catalyzes the cleavage of the D-lactyl ether substituent of MurNAc 6-phosphate, producing GlcNAc 6-phosphate and D-lactate. Together with AnmK, is also required for the utilization of anhydro-N-acetylmuramic acid (anhMurNAc) either imported from the medium or derived from its own cell wall murein, and thus plays a role in cell wall recycling. The protein is N-acetylmuramic acid 6-phosphate etherase of Photobacterium profundum (strain SS9).